A 557-amino-acid polypeptide reads, in one-letter code: DNA 3'-5' helicase XPB (557 aa).

The interval 1 to 135 (MTDGPLIVQS…APLLGTRIAP (135 aa)) is required for protein stability or solubility. A Helicase ATP-binding domain is found at 190-344 (VDNFWNGGSG…DVFSLIGPKR (155 aa)). 203–210 (LPCGAGKT) contacts ATP. The short motif at 298 to 301 (DEVH) is the DEAH box element. A Helicase C-terminal domain is found at 398–544 (RVVEKLVAQH…AYRIVDADDI (147 aa)).

The protein belongs to the helicase family. RAD25/XPB subfamily. Monomer. Requires Mn(2+) as cofactor. Mg(2+) is required as a cofactor. The cofactor is Ca(2+).

It catalyses the reaction Couples ATP hydrolysis with the unwinding of duplex DNA by translocating in the 3'-5' direction.. It carries out the reaction ATP + H2O = ADP + phosphate + H(+). Functionally, ATP-dependent 3'-5' DNA helicase, unwinds 3'-overhangs, 3'- flaps, and splayed-arm DNA substrates but not 5'-overhangs or 5'-flap substrates. Requires ATP hydrolysis for activity; the ATPase activity is DNA-dependent and requires a minimum of 4 single-stranded nucleotides (nt) with 6-10 nt providing all necessary interactions for full processive unwinding. The ATPase prefers ATP over CTP or GTP, is almost inactive with TTP. The sequence is that of DNA 3'-5' helicase XPB from Kineococcus radiotolerans (strain ATCC BAA-149 / DSM 14245 / SRS30216).